The chain runs to 447 residues: Peptide chain release factor 1, mitochondrial (447 aa).

A mitochondrion-targeting transit peptide spans 1–63 (MNRRHLFAWL…LLNKNCSRRY (63 aa)). The tract at residues 299-363 (PKDLRIDTFR…LRARLYQQII (65 aa)) is GGQ domain. The GGQ motif lies at 313–315 (GGQ). N5-methylglutamine is present on Gln-315.

It belongs to the prokaryotic/mitochondrial release factor family. Post-translationally, methylation of glutamine in the GGQ triplet by HEMK1 is conserved from bacteria to mammals.

It localises to the mitochondrion. Its function is as follows. Mitochondrial peptide chain release factor that directs the termination of translation in response to the peptide chain non-canonical stop codons AGG and AGA. Non-canonical termination codons AGG and AGA are found at the end of MT-CO1/COX1 and MT-ND6/ND6 open reading frames, respectively. Recognizes non-canonical stop codons via a network of interactions between the codon, MTRF1 and the ribosomal RNA (rRNA): in contrast to other translation release factors, which identify the codon in the A-site via direct interactions of amino acid side chains with the bases, MTRF1 repositions the first 2 bases of the stop codon to use an intricate network of interactions that includes residues of the release factor, the rRNA of the small ribosomal subunit, as well as neighboring bases of the mRNA. The sequence is that of Peptide chain release factor 1, mitochondrial (MTRF1) from Bos taurus (Bovine).